The chain runs to 1151 residues: Ankyrin and IPT/TIG repeat-containing protein C26H5.05 (1151 aa).

Disordered regions lie at residues 77-104 (NLPS…AECL), 452-511 (KSRN…ENSR), and 516-535 (QLSA…KSVE). The segment covering 87–98 (SHASSPNLSNSQ) has biased composition (polar residues). Residues 452–463 (KSRNLTKSEKTG) are compositionally biased toward basic and acidic residues. Composition is skewed to polar residues over residues 464 to 496 (KSNS…SDNP) and 517 to 532 (LSAS…STLK). Residues 658 to 739 (PLISRIIPNK…SSEAPVMFTY (82 aa)) form the IPT/TIG domain. ANK repeat units follow at residues 861–890 (SGRS…DVNK) and 894–923 (LGYT…KPDV). The segment at 1041–1067 (PPPYSEFADDTTAQAGSSKRDSAISED) is disordered. A compositionally biased stretch (basic and acidic residues) spans 1058 to 1067 (SKRDSAISED). The chain crosses the membrane as a helical span at residues 1113-1133 (MDFMLFSFWLPALLLLSIFGL).

The protein resides in the vacuole membrane. In Schizosaccharomyces pombe (strain 972 / ATCC 24843) (Fission yeast), this protein is Ankyrin and IPT/TIG repeat-containing protein C26H5.05.